We begin with the raw amino-acid sequence, 238 residues long: Ribonuclease PH (238 aa).

Residues R86 and G124 to R126 contribute to the phosphate site.

The protein belongs to the RNase PH family. Homohexameric ring arranged as a trimer of dimers.

It catalyses the reaction tRNA(n+1) + phosphate = tRNA(n) + a ribonucleoside 5'-diphosphate. Phosphorolytic 3'-5' exoribonuclease that plays an important role in tRNA 3'-end maturation. Removes nucleotide residues following the 3'-CCA terminus of tRNAs; can also add nucleotides to the ends of RNA molecules by using nucleoside diphosphates as substrates, but this may not be physiologically important. Probably plays a role in initiation of 16S rRNA degradation (leading to ribosome degradation) during starvation. This Psychrobacter sp. (strain PRwf-1) protein is Ribonuclease PH.